The sequence spans 156 residues: Snaclec A3 (156 aa).

The N-terminal stretch at 1–23 (MGRSISVSFGLLVVFLSLSGTGA) is a signal peptide. 3 disulfide bridges follow: C27–C38, C55–C154, and C129–C146. In terms of domain architecture, C-type lectin spans 34 to 155 (HEGHCYKVFN…CGQPYRFTCE (122 aa)).

Belongs to the snaclec family. In terms of assembly, heterodimer; disulfide-linked. As to expression, expressed by the venom gland.

The protein resides in the secreted. Functionally, interferes with one step of hemostasis (modulation of platelet aggregation, or coagulation cascade, for example). This Macrovipera lebetinus (Levantine viper) protein is Snaclec A3.